A 141-amino-acid chain; its full sequence is Large ribosomal subunit protein uL11B/uL11C (141 aa).

This sequence belongs to the universal ribosomal protein uL11 family. In terms of assembly, part of the ribosomal stalk of the 50S ribosomal subunit. Interacts with L10 and the large rRNA to form the base of the stalk. L10 forms an elongated spine to which L12 dimers bind in a sequential fashion forming a multimeric L10(L12)X complex. Post-translationally, one or more lysine residues are methylated.

Its function is as follows. Forms part of the ribosomal stalk which helps the ribosome interact with GTP-bound translation factors. This chain is Large ribosomal subunit protein uL11B/uL11C, found in Bacillus cereus (strain ATCC 14579 / DSM 31 / CCUG 7414 / JCM 2152 / NBRC 15305 / NCIMB 9373 / NCTC 2599 / NRRL B-3711).